We begin with the raw amino-acid sequence, 178 residues long: ATP-dependent protease subunit HslV (178 aa).

Threonine 7 is a catalytic residue. Na(+) is bound by residues glycine 162, cysteine 165, and threonine 168.

It belongs to the peptidase T1B family. HslV subfamily. A double ring-shaped homohexamer of HslV is capped on each side by a ring-shaped HslU homohexamer. The assembly of the HslU/HslV complex is dependent on binding of ATP.

It is found in the cytoplasm. The enzyme catalyses ATP-dependent cleavage of peptide bonds with broad specificity.. Allosterically activated by HslU binding. Its function is as follows. Protease subunit of a proteasome-like degradation complex believed to be a general protein degrading machinery. This Paraburkholderia xenovorans (strain LB400) protein is ATP-dependent protease subunit HslV.